A 518-amino-acid polypeptide reads, in one-letter code: D-aminopeptidase (518 aa).

The active-site Nucleophile is the serine 62. Lysine 65 (proton donor/acceptor) is an active-site residue. Residues 373 to 392 are disordered; the sequence is FGTGPEKMDISGENEAQSSM. Positions 477–487 are important for specificity; that stretch reads QRSMDAPSPGE. Aspartate 481 contributes to the substrate binding site.

It belongs to the peptidase S12 family. In terms of assembly, homodimer.

The catalysed reaction is Release of an N-terminal D-amino acid from a peptide, Xaa-|-Yaa-, in which Xaa is preferably D-Ala, D-Ser or D-Thr. D-amino acid amides and methyl esters also are hydrolyzed, as is glycine amide.. With respect to regulation, inhibited by beta-lactam compounds such as 6-aminopenicillic acid, 7-aminocephalosporanic acid, benzylpenicillin and ampicillin. Inhibited by p-chloromercuribenzoate. Functionally, hydrolyzes N-terminal residues in D-amino acid-containing peptides. The chain is D-aminopeptidase from Brucella melitensis biotype 1 (strain ATCC 23456 / CCUG 17765 / NCTC 10094 / 16M).